We begin with the raw amino-acid sequence, 648 residues long: Chaperone protein HtpG (648 aa).

The segment at 1 to 349 is a; substrate-binding; sequence MTTEHAAGAQ…SSDLPLNVSR (349 aa). Residues 350–570 are b; sequence EILQESKDID…EHDVGMNLAR (221 aa). Residues 571–648 are c; that stretch reads ILKAAGQQAP…MAMGGSAGTD (78 aa).

This sequence belongs to the heat shock protein 90 family. As to quaternary structure, homodimer.

The protein localises to the cytoplasm. Functionally, molecular chaperone. Has ATPase activity. This Aromatoleum aromaticum (strain DSM 19018 / LMG 30748 / EbN1) (Azoarcus sp. (strain EbN1)) protein is Chaperone protein HtpG.